The sequence spans 304 residues: MIVRPQQHWLRRIFVWHGSVLSKISSRLLLNFLFSIAVIFMLPWYTHLGIKFTLAPFSILGVAIAIFLGFRNNAGYARYVEARKLWGQLMIASRSLLREVKTTLPDSASVREFARLQIAFAHCLRMTLRKQPQAEVLAHYLKTEDLQRVLASNSPANRILLIMGEWLAVQRRNGQLSDILFISLNDRLNDISAVLAGCERIAYTPIPFAYTLILHRTVYLFCIMLPFALVVDLHYMTPFISVLISYTFISLDCLAEELEDPFGTENNDLPLDAICNAIEIDLLQMNDEAEIPAKILPDRHYQLT.

Helical transmembrane passes span 28–48 (LLLN…YTHL), 50–70 (IKFT…FLGF), 194–214 (VLAG…TLIL), and 220–240 (LFCI…TPFI).

This sequence belongs to the anion channel-forming bestrophin (TC 1.A.46) family.

The protein localises to the cell membrane. This chain is Voltage-dependent anion channel-forming protein YneE (yneE), found in Escherichia coli (strain K12).